The following is a 165-amino-acid chain: Fimbrial protein (165 aa).

An N-terminal signal peptide occupies residues 1–21; that stretch reads MRKSASAVAVLALIACGSAHA.

The protein resides in the fimbrium. Functionally, structural subunit of the sef14 fimbriae. This Salmonella enteritidis protein is Fimbrial protein (sefA).